The chain runs to 99 residues: Aspartyl/glutamyl-tRNA(Asn/Gln) amidotransferase subunit C (99 aa).

It belongs to the GatC family. In terms of assembly, heterotrimer of A, B and C subunits.

It carries out the reaction L-glutamyl-tRNA(Gln) + L-glutamine + ATP + H2O = L-glutaminyl-tRNA(Gln) + L-glutamate + ADP + phosphate + H(+). The catalysed reaction is L-aspartyl-tRNA(Asn) + L-glutamine + ATP + H2O = L-asparaginyl-tRNA(Asn) + L-glutamate + ADP + phosphate + 2 H(+). Its function is as follows. Allows the formation of correctly charged Asn-tRNA(Asn) or Gln-tRNA(Gln) through the transamidation of misacylated Asp-tRNA(Asn) or Glu-tRNA(Gln) in organisms which lack either or both of asparaginyl-tRNA or glutaminyl-tRNA synthetases. The reaction takes place in the presence of glutamine and ATP through an activated phospho-Asp-tRNA(Asn) or phospho-Glu-tRNA(Gln). The polypeptide is Aspartyl/glutamyl-tRNA(Asn/Gln) amidotransferase subunit C (Cupriavidus metallidurans (strain ATCC 43123 / DSM 2839 / NBRC 102507 / CH34) (Ralstonia metallidurans)).